The chain runs to 763 residues: MDSTTSSSRFSVSSPQSGPSAGIQKGRQRTITACLTCRRRKVKCDHAQPVCTPCQRGGRVCTYVTPQPVSQAPSRVGTGSRVSRTNLRSGQEEIRSRLERLEKLLERAISGGGNMSILPDAKGTSTGSPSDVDQGGNALPNPKCETLSADGYDGALLLEAEGGQSRWVSSLHYALLADEIHDVKMLLGDQSSGAPADSPPSDQPTPPFPFSGSTVESLTPWSPKSAEDCLALLEIFYSNVDPMTRLVHKPTLQRRFTQYINHTYGTRTQSPGVEEAADASRPDHTIHAFEPLALAIFYSAINSLSAEDVMMRFAAEKDALLAQFQRGVELGLGREDFLTTPSIEVLQAFVLLLTCQSREDDMSRTWTLLGLVVRMALSQGLHREPSLFPSSNMDVVQVETRRRLWHQICHLDFRSAEGRGQEPTIADEDYTTLLPRNINDEDLIEGAHPTAETYSPPGFTDMTGHLIRLHGIHCFRRIVRSTYRLERRIKSSVANGNGNLYPIAELQSLFVEVRTMVDEMVNHLQTQYLQYCDPQIPHQRMALGLAAVIEWRCWSIFWLRTPKQYREAVVSPEIRQTVLAKSVSLVESLNMMSDDKDAQKFQWHIGGHACFQSIMHIVSELETPEFQAANHRSLRSRALSVLKRTMDTRGHEVTPMWNVINRIISNCLAKNAPSTFPLSPFQAMFPPNAAIPGLGSSTTVPPQTIAQNSSVSGGSAMATPLPDLSEVGSLDMQDPTLAFDWVSESNALMRRSPLMFWVGVLEL.

Low complexity predominate over residues 1-20; the sequence is MDSTTSSSRFSVSSPQSGPS. Residues 1–25 are disordered; that stretch reads MDSTTSSSRFSVSSPQSGPSAGIQK. Residues 34-61 constitute a DNA-binding region (zn(2)-C6 fungal-type); that stretch reads CLTCRRRKVKCDHAQPVCTPCQRGGRVC. Disordered stretches follow at residues 68 to 91, 112 to 145, and 189 to 219; these read PVSQ…RSGQ, GGNM…PKCE, and DQSS…ESLT. Residues 80–89 show a composition bias toward polar residues; it reads SRVSRTNLRS. The segment covering 197–209 has biased composition (pro residues); the sequence is DSPPSDQPTPPFP.

The protein resides in the nucleus. In terms of biological role, transcription factor; part of the gene cluster that mediates the biosynthesis of hexadehydro-astechrome (HAS), a tryptophan-derived iron(III)-complex that acts as a virulence factor in infected mice. Does not regulate the expression of the HAS biosynthetic genes (at least under the growth conditions tested). The chain is C6 finger domain transcription factor hasF from Aspergillus fumigatus (strain CBS 144.89 / FGSC A1163 / CEA10) (Neosartorya fumigata).